A 337-amino-acid polypeptide reads, in one-letter code: Aspartate carbamoyltransferase catalytic subunit (337 aa).

Carbamoyl phosphate contacts are provided by Arg59 and Thr60. Lys87 provides a ligand contact to L-aspartate. Carbamoyl phosphate is bound by residues Arg109, His142, and Gln145. L-aspartate contacts are provided by Arg182 and Arg253. Carbamoyl phosphate-binding residues include Gly294 and Pro295.

This sequence belongs to the aspartate/ornithine carbamoyltransferase superfamily. ATCase family. In terms of assembly, heterododecamer (2C3:3R2) of six catalytic PyrB chains organized as two trimers (C3), and six regulatory PyrI chains organized as three dimers (R2).

It carries out the reaction carbamoyl phosphate + L-aspartate = N-carbamoyl-L-aspartate + phosphate + H(+). The protein operates within pyrimidine metabolism; UMP biosynthesis via de novo pathway; (S)-dihydroorotate from bicarbonate: step 2/3. Functionally, catalyzes the condensation of carbamoyl phosphate and aspartate to form carbamoyl aspartate and inorganic phosphate, the committed step in the de novo pyrimidine nucleotide biosynthesis pathway. The polypeptide is Aspartate carbamoyltransferase catalytic subunit (Prochlorococcus marinus (strain MIT 9211)).